A 157-amino-acid polypeptide reads, in one-letter code: Small ribosomal subunit protein uS7 (157 aa).

The protein belongs to the universal ribosomal protein uS7 family. Part of the 30S ribosomal subunit. Contacts proteins S9 and S11.

In terms of biological role, one of the primary rRNA binding proteins, it binds directly to 16S rRNA where it nucleates assembly of the head domain of the 30S subunit. Is located at the subunit interface close to the decoding center, probably blocks exit of the E-site tRNA. The protein is Small ribosomal subunit protein uS7 of Albidiferax ferrireducens (strain ATCC BAA-621 / DSM 15236 / T118) (Rhodoferax ferrireducens).